We begin with the raw amino-acid sequence, 600 residues long: MHKYRTHNCNELQISDVRKEVKLSGWVHRRRDHGNLVFIDLRDHYGITQIVFTDQNQQLMEDASRLRYESVITVRGTIVARSNDTINDTLPTGHIEVLAGEFIVESAADTLPFVINTEKDAPEETRLKHRFLDLRREKLHNNIILRSQIISHIRHLMTGRGFTEFQTPILTASSPEGARDFLVPSRMHPGKFYALPQAPQQFKQLLMVSGFDRYFQIAPCFRDEDARADRSPGEFYQLDVEMSFVTQEDIFSTIEPVMYDLFTKFTAKKVSETPFVRIPYNESMLKYGSDKPDLRNPIIIADVTEIFRDSDFTIFRENIKKGSIVRAIPAPKAAALPRSFFDKMIEFAISEGAGGLGYIQFSETGEAKGPVAKFLSPQQLESLKATASISNGDAVFFASDKKEKAAKLAGKVRIRLGEELDLLEKDCFKFCWITDFPFYELNEDTGKIDFSHNPFSMPQGGLEALEQAKTTEELLELTAYQYDIVCNGIELSSGAIRNHKPEIMYKAFSMAGYSEEEVDKRFGGMIRAFKFGAPPHGGIAPGIDRIVMLLAEATNIREIIAFPLNQQAEDLLMNAPSYVEDKALKELSIMLSPSILKNMK.

Residue glutamate 176 coordinates L-aspartate. The tract at residues 200 to 203 (QQFK) is aspartate. Positions 222 and 452 each coordinate L-aspartate. Residue 222-224 (RDE) participates in ATP binding. ATP is bound at residue glutamate 490. Arginine 497 contacts L-aspartate. 542-545 (GIDR) is an ATP binding site.

The protein belongs to the class-II aminoacyl-tRNA synthetase family. Type 1 subfamily. In terms of assembly, homodimer.

It localises to the cytoplasm. It carries out the reaction tRNA(Asx) + L-aspartate + ATP = L-aspartyl-tRNA(Asx) + AMP + diphosphate. Its function is as follows. Aspartyl-tRNA synthetase with relaxed tRNA specificity since it is able to aspartylate not only its cognate tRNA(Asp) but also tRNA(Asn). Reaction proceeds in two steps: L-aspartate is first activated by ATP to form Asp-AMP and then transferred to the acceptor end of tRNA(Asp/Asn). The polypeptide is Aspartate--tRNA(Asp/Asn) ligase (Rickettsia felis (strain ATCC VR-1525 / URRWXCal2) (Rickettsia azadi)).